Reading from the N-terminus, the 849-residue chain is Glycogen phosphorylase (849 aa).

Residue Lys679 is modified to N6-(pyridoxal phosphate)lysine.

The protein belongs to the glycogen phosphorylase family. The cofactor is pyridoxal 5'-phosphate.

It carries out the reaction [(1-&gt;4)-alpha-D-glucosyl](n) + phosphate = [(1-&gt;4)-alpha-D-glucosyl](n-1) + alpha-D-glucose 1-phosphate. Functionally, phosphorylase is an important allosteric enzyme in carbohydrate metabolism. Enzymes from different sources differ in their regulatory mechanisms and in their natural substrates. However, all known phosphorylases share catalytic and structural properties. In Synechocystis sp. (strain ATCC 27184 / PCC 6803 / Kazusa), this protein is Glycogen phosphorylase (glgP).